The sequence spans 445 residues: C4-dicarboxylate transport protein (445 aa).

8 helical membrane passes run 24–44 (VLYV…WVSP), 62–82 (LIKM…IAHI), 105–125 (FALI…GLAA), 163–183 (GDIL…MALG), 201–221 (FGVI…AMAF), 237–257 (LVAL…GLIA), 322–342 (IYMT…LTFT), and 370–390 (AGTL…VFSI).

This sequence belongs to the dicarboxylate/amino acid:cation symporter (DAACS) (TC 2.A.23) family.

The protein localises to the cell inner membrane. Its function is as follows. Responsible for the transport of dicarboxylates such as succinate, fumarate, and malate from the periplasm across the membrane. In Rhodopseudomonas palustris (strain BisB5), this protein is C4-dicarboxylate transport protein.